The following is a 353-amino-acid chain: Photosystem II D2 protein (353 aa).

An N-acetylthreonine modification is found at threonine 2. Threonine 2 is modified (phosphothreonine). Residues 41–61 form a helical membrane-spanning segment; it reads TAYFALGGWFTGTTFVTSWYT. Histidine 118 is a binding site for chlorophyll a. Residues 125 to 141 form a helical membrane-spanning segment; that stretch reads GFMLRQFELARSVQLRP. The pheophytin a site is built by glutamine 130 and asparagine 143. A helical transmembrane segment spans residues 153-166; the sequence is VFVSVFLIYPLGQS. Histidine 198 contacts chlorophyll a. A helical transmembrane segment spans residues 208–228; it reads AALLCAIHGATVENTLFEDGD. A plastoquinone is bound by residues histidine 215 and phenylalanine 262. Histidine 215 contributes to the Fe cation binding site. A Fe cation-binding site is contributed by histidine 269. Residues 279 to 295 traverse the membrane as a helical segment; that stretch reads GLWMSAIGVVGLALNLR.

It belongs to the reaction center PufL/M/PsbA/D family. In terms of assembly, PSII is composed of 1 copy each of membrane proteins PsbA, PsbB, PsbC, PsbD, PsbE, PsbF, PsbH, PsbI, PsbJ, PsbK, PsbL, PsbM, PsbT, PsbX, PsbY, PsbZ, Psb30/Ycf12, at least 3 peripheral proteins of the oxygen-evolving complex and a large number of cofactors. It forms dimeric complexes. The cofactor is The D1/D2 heterodimer binds P680, chlorophylls that are the primary electron donor of PSII, and subsequent electron acceptors. It shares a non-heme iron and each subunit binds pheophytin, quinone, additional chlorophylls, carotenoids and lipids. There is also a Cl(-1) ion associated with D1 and D2, which is required for oxygen evolution. The PSII complex binds additional chlorophylls, carotenoids and specific lipids..

The protein resides in the plastid. The protein localises to the chloroplast thylakoid membrane. The enzyme catalyses 2 a plastoquinone + 4 hnu + 2 H2O = 2 a plastoquinol + O2. Functionally, photosystem II (PSII) is a light-driven water:plastoquinone oxidoreductase that uses light energy to abstract electrons from H(2)O, generating O(2) and a proton gradient subsequently used for ATP formation. It consists of a core antenna complex that captures photons, and an electron transfer chain that converts photonic excitation into a charge separation. The D1/D2 (PsbA/PsbD) reaction center heterodimer binds P680, the primary electron donor of PSII as well as several subsequent electron acceptors. D2 is needed for assembly of a stable PSII complex. This is Photosystem II D2 protein from Adiantum capillus-veneris (Maidenhair fern).